The following is a 384-amino-acid chain: Class V chitinase CHIT5a (384 aa).

The first 27 residues, Met-1 to Ser-27, serve as a signal peptide directing secretion. Residues Asn-29, Asn-114, and Asn-133 are each glycosylated (N-linked (GlcNAc...) asparagine). Positions Gly-39–His-384 constitute a GH18 domain. The Proton donor role is filled by Glu-152. Asn-195 and Asn-234 each carry an N-linked (GlcNAc...) asparagine glycan.

The protein belongs to the glycosyl hydrolase 18 family. Chitinase class V subfamily.

It carries out the reaction Random endo-hydrolysis of N-acetyl-beta-D-glucosaminide (1-&gt;4)-beta-linkages in chitin and chitodextrins.. It participates in glycan degradation; chitin degradation. Possesses chitinase activity in vitro toward glycol chitin, carboxymethyl-chitin, colloidal chitin, and the chitin oligosaccharides (N-acetylglucosamine) (GlcNAc)6 and (GlcNAc)5. Hydrolyzes (GlcNAc)6 into (GlcNAc)4 and (GlcNAc)2, or two (GlcNAc)3 molecules. Has the capacity to inhibit hyphal growth of the fungus Trichoderma viride in an agar-plate bioassay. This is Class V chitinase CHIT5a from Medicago truncatula (Barrel medic).